The following is a 691-amino-acid chain: Pentatricopeptide repeat-containing protein At5g27110 (691 aa).

16 PPR repeats span residues 38–68 (DVVLCKSLINVYFTCKDHCSARHVFENFDIR), 70–104 (DVYIWNSLMSGYSKNSMFHDTLEVFKRLLNCSICV), 106–140 (DSFTFPNVIKAYGALGREFLGRMIHTLVVKSGYVC), 141–171 (DVVVASSLVGMYAKFNLFENSLQVFDEMPER), 172–206 (DVASWNTVISCFYQSGEAEKALELFGRMESSGFEP), 207–241 (NSVSLTVAISACSRLLWLERGKEIHRKCVKKGFEL), 242–272 (DEYVNSALVDMYGKCDCLEVAREVFQKMPRK), 273–307 (SLVAWNSMIKGYVAKGDSKSCVEILNRMIIEGTRP), 308–342 (SQTTLTSILMACSRSRNLLHGKFIHGYVIRSVVNA), 343–373 (DIYVNCSLIDLYFKCGEANLAETVFSKTQKD), 374–408 (VAESWNVMISSYISVGNWFKAVEVYDQMVSVGVKP), 409–443 (DVVTFTSVLPACSQLAALEKGKQIHLSISESRLET), 444–474 (DELLLSALLDMYSKCGNEKEAFRIFNSIPKK), 475–509 (DVVSWTVMISAYGSHGQPREALYQFDEMQKFGLKP), 510–540 (DGVTLLAVLSACGHAGLIDEGLKFFSQMRSK), and 546–576 (IIEHYSCMIDILGRAGRLLEAYEIIQQTPET). The type E motif stretch occupies residues 582-657 (LLSTLFSACC…KPGCSWIEMS (76 aa)). Positions 658-688 (DKVCHFFAEDRSHLRAENVYECLALLSGHME) are type E(+) motif.

It belongs to the PPR family. PCMP-E subfamily.

This is Pentatricopeptide repeat-containing protein At5g27110 (PCMP-E14) from Arabidopsis thaliana (Mouse-ear cress).